Consider the following 433-residue polypeptide: Probable M18 family aminopeptidase 2 (433 aa).

Zn(2+) is bound by residues H79, H153, and H404.

Belongs to the peptidase M18 family. Zn(2+) serves as cofactor.

The polypeptide is Probable M18 family aminopeptidase 2 (apeB) (Mycobacterium bovis (strain ATCC BAA-935 / AF2122/97)).